A 108-amino-acid chain; its full sequence is uncharacterized protein (108 aa).

The tract at residues 74 to 108 (TGSKKRDSKANSRSRPSGTITSRGARIGLQGYKSH) is disordered. Polar residues predominate over residues 84 to 95 (NSRSRPSGTITS).

This is an uncharacterized protein from Saccharomyces cerevisiae (strain ATCC 204508 / S288c) (Baker's yeast).